Here is an 85-residue protein sequence, read N- to C-terminus: Large ribosomal subunit protein bL27 (85 aa).

Residues 1-20 (MAHKKAGGSTRNGRDSEAKR) form a disordered region.

This sequence belongs to the bacterial ribosomal protein bL27 family.

This is Large ribosomal subunit protein bL27 from Citrobacter koseri (strain ATCC BAA-895 / CDC 4225-83 / SGSC4696).